The chain runs to 297 residues: Glycerol-3-phosphate dehydrogenase [NAD(P)+] (297 aa).

Residues tryptophan 11, arginine 33, and lysine 79 each contribute to the NADPH site. Residues lysine 79, glycine 107, and serine 109 each contribute to the sn-glycerol 3-phosphate site. Alanine 111 provides a ligand contact to NADPH. Sn-glycerol 3-phosphate-binding residues include lysine 161, aspartate 214, serine 224, arginine 225, and asparagine 226. Lysine 161 serves as the catalytic Proton acceptor. Arginine 225 is a binding site for NADPH. 2 residues coordinate NADPH: valine 249 and glutamate 251.

The protein belongs to the NAD-dependent glycerol-3-phosphate dehydrogenase family.

The protein localises to the cytoplasm. It catalyses the reaction sn-glycerol 3-phosphate + NAD(+) = dihydroxyacetone phosphate + NADH + H(+). The catalysed reaction is sn-glycerol 3-phosphate + NADP(+) = dihydroxyacetone phosphate + NADPH + H(+). It participates in membrane lipid metabolism; glycerophospholipid metabolism. Catalyzes the reduction of the glycolytic intermediate dihydroxyacetone phosphate (DHAP) to sn-glycerol 3-phosphate (G3P), the key precursor for phospholipid synthesis. The protein is Glycerol-3-phosphate dehydrogenase [NAD(P)+] of Campylobacter jejuni subsp. doylei (strain ATCC BAA-1458 / RM4099 / 269.97).